The following is a 155-amino-acid chain: Ribosome maturation factor RimP (155 aa).

It belongs to the RimP family.

It is found in the cytoplasm. Functionally, required for maturation of 30S ribosomal subunits. The protein is Ribosome maturation factor RimP of Staphylococcus aureus (strain bovine RF122 / ET3-1).